The sequence spans 196 residues: uncharacterized protein (196 aa).

An HTH cro/C1-type domain is found at 12 to 66 (LRAAREAQKMSQRELSARSGLTQSHISQIERGTMEPGLGSLVDVARALDLEIVLA). The segment at residues 23–42 (QRELSARSGLTQSHISQIER) is a DNA-binding region (H-T-H motif). The disordered stretch occupies residues 174–196 (VHRDRDDAVPRSAYALDEEDDNA).

This is an uncharacterized protein from Sinorhizobium fredii (strain NBRC 101917 / NGR234).